A 434-amino-acid chain; its full sequence is MQVSVEATQGLERRLTISVPAEQIEKLVKDSLQREAKRARIPGFRPGKVPVTVINKRYGAAIRQDITGEVMQRNFIEAIIAEKLNPAGAPTFVPGATDGEKFEFVATFEIYPEVELKGLDAIEVEQPKASVTDADVDSMIETLRKQHATFAAVEREAADGDKVKMNFVGSVDGVEFEGGKADDFELQLGSGRMIPGFEAGILGHKAGEEFVIDVTFPEEYHAENLKGKAAKFAITLTEVLAANLPEVNDEFAALFGISEGGLDALKTEIRKNMNRELEQALKANVKEQVITGLLANNDIELPKALIDGEVNVLRQQAMQRFGGQTANMPELPAELFTEQAARRVKIGLLLGEVIKTNELKAEDERVQALIASMASAYEDPSEVVAYYNSNKELMQNMRNVALEEQAVEALLKSAKVTEKEVAFEEFMNKATGRA.

A PPIase FKBP-type domain is found at Gly-160–Pro-245.

It belongs to the FKBP-type PPIase family. Tig subfamily.

It is found in the cytoplasm. It catalyses the reaction [protein]-peptidylproline (omega=180) = [protein]-peptidylproline (omega=0). In terms of biological role, involved in protein export. Acts as a chaperone by maintaining the newly synthesized protein in an open conformation. Functions as a peptidyl-prolyl cis-trans isomerase. This is Trigger factor from Shewanella sp. (strain ANA-3).